The sequence spans 169 residues: ATP synthase subunit b (169 aa).

The chain crosses the membrane as a helical span at residues 12–32; it reads HIYLGNAIWYLLCFAILMLLI.

The protein belongs to the ATPase B chain family. In terms of assembly, F-type ATPases have 2 components, F(1) - the catalytic core - and F(0) - the membrane proton channel. F(1) has five subunits: alpha(3), beta(3), gamma(1), delta(1), epsilon(1). F(0) has three main subunits: a(1), b(2) and c(10-14). The alpha and beta chains form an alternating ring which encloses part of the gamma chain. F(1) is attached to F(0) by a central stalk formed by the gamma and epsilon chains, while a peripheral stalk is formed by the delta and b chains.

The protein resides in the cell membrane. With respect to regulation, increases 2-fold following exposure to low pH. F(1)F(0) ATP synthase produces ATP from ADP in the presence of a proton or sodium gradient. F-type ATPases consist of two structural domains, F(1) containing the extramembraneous catalytic core and F(0) containing the membrane proton channel, linked together by a central stalk and a peripheral stalk. During catalysis, ATP synthesis in the catalytic domain of F(1) is coupled via a rotary mechanism of the central stalk subunits to proton translocation. In terms of biological role, component of the F(0) channel, it forms part of the peripheral stalk, linking F(1) to F(0). In Lactobacillus acidophilus (strain ATCC 700396 / NCK56 / N2 / NCFM), this protein is ATP synthase subunit b.